The following is a 597-amino-acid chain: Fructan 1-exohydrolase w1 (597 aa).

An N-terminal signal peptide occupies residues 1 to 20 (MAQAWAFLLPVLVFGSYVTS). Asp76 is an active-site residue. N-linked (GlcNAc...) asparagine glycans are attached at residues Asn169, Asn237, and Asn249. Cys447 and Cys493 are oxidised to a cystine. A glycan (N-linked (GlcNAc...) asparagine) is linked at Asn568.

The protein belongs to the glycosyl hydrolase 32 family.

The enzyme catalyses Hydrolysis of terminal, non-reducing (2-&gt;1)-linked beta-D-fructofuranose residues in fructans.. Its activity is regulated as follows. Inhibited by sucrose. In terms of biological role, hydrolyzes inulin-type beta-(2,1)-fructans and beta-(2,1)-linkages in branched fructans. Has low activity against beta-(2,6)-linked fructans. May play a role as a beta-(2,1)-trimmer during graminan biosynthesis. The protein is Fructan 1-exohydrolase w1 of Triticum aestivum (Wheat).